A 229-amino-acid polypeptide reads, in one-letter code: Potassium/proton antiporter CemA (229 aa).

Transmembrane regions (helical) follow at residues 7–27 (FTPL…SLSF), 107–127 (ILHF…SLLG), and 189–209 (IISG…KYWI).

Belongs to the CemA family.

It is found in the plastid. It localises to the chloroplast inner membrane. The enzyme catalyses K(+)(in) + H(+)(out) = K(+)(out) + H(+)(in). Its function is as follows. Contributes to K(+)/H(+) antiport activity by supporting proton efflux to control proton extrusion and homeostasis in chloroplasts in a light-dependent manner to modulate photosynthesis. Prevents excessive induction of non-photochemical quenching (NPQ) under continuous-light conditions. Indirectly promotes efficient inorganic carbon uptake into chloroplasts. In Lactuca sativa (Garden lettuce), this protein is Potassium/proton antiporter CemA.